The following is a 263-amino-acid chain: Kallikrein 1-related peptidase b24 (263 aa).

A signal peptide spans 1 to 17 (MWFLILFLALSLGGIDA). A propeptide spans 18 to 24 (APPVQSR) (activation peptide). In terms of domain architecture, Peptidase S1 spans 25-260 (VVGGFKCEKN…FASWIKDTMA (236 aa)). Disulfide bonds link Cys31-Cys175, Cys50-Cys66, Cys154-Cys221, Cys186-Cys200, and Cys211-Cys236. The active-site Charge relay system is the His65. Asn69 and Asn105 each carry an N-linked (GlcNAc...) asparagine glycan. Catalysis depends on Asp122, which acts as the Charge relay system. Asn185 carries N-linked (GlcNAc...) asparagine glycosylation. The Charge relay system role is filled by Ser215.

This sequence belongs to the peptidase S1 family. Kallikrein subfamily.

The catalysed reaction is Preferential cleavage of Arg-|-Xaa bonds in small molecule substrates. Highly selective action to release kallidin (lysyl-bradykinin) from kininogen involves hydrolysis of Met-|-Xaa or Leu-|-Xaa.. Its function is as follows. Glandular kallikreins cleave Met-Lys and Arg-Ser bonds in kininogen to release Lys-bradykinin. The chain is Kallikrein 1-related peptidase b24 (Klk1b24) from Mus musculus (Mouse).